The chain runs to 1216 residues: DNA-directed RNA polymerase subunit beta' (1216 aa).

Zn(2+) is bound by residues Cys60, Cys62, Cys75, and Cys78. The Mg(2+) site is built by Asp450, Asp452, and Asp454. The Zn(2+) site is built by Cys819, Cys893, Cys900, and Cys903.

This sequence belongs to the RNA polymerase beta' chain family. In terms of assembly, the RNAP catalytic core consists of 2 alpha, 1 beta, 1 beta' and 1 omega subunit. When a sigma factor is associated with the core the holoenzyme is formed, which can initiate transcription. The cofactor is Mg(2+). Requires Zn(2+) as cofactor.

It carries out the reaction RNA(n) + a ribonucleoside 5'-triphosphate = RNA(n+1) + diphosphate. Functionally, DNA-dependent RNA polymerase catalyzes the transcription of DNA into RNA using the four ribonucleoside triphosphates as substrates. The sequence is that of DNA-directed RNA polymerase subunit beta' from Streptococcus agalactiae serotype Ia (strain ATCC 27591 / A909 / CDC SS700).